Here is a 94-residue protein sequence, read N- to C-terminus: Small ribosomal subunit protein uS17 (94 aa).

Belongs to the universal ribosomal protein uS17 family. Part of the 30S ribosomal subunit.

Its function is as follows. One of the primary rRNA binding proteins, it binds specifically to the 5'-end of 16S ribosomal RNA. The protein is Small ribosomal subunit protein uS17 of Streptomyces griseus subsp. griseus (strain JCM 4626 / CBS 651.72 / NBRC 13350 / KCC S-0626 / ISP 5235).